The following is a 597-amino-acid chain: NADH-quinone oxidoreductase subunit C/D (597 aa).

The NADH dehydrogenase I subunit C stretch occupies residues 1-187; it reads MIDENKKKNT…ESFFLDEQKE (187 aa). Residues 211 to 597 form an NADH dehydrogenase I subunit D region; the sequence is DFMFLNLGPN…IDFVMSDVDR (387 aa).

It in the N-terminal section; belongs to the complex I 30 kDa subunit family. In the C-terminal section; belongs to the complex I 49 kDa subunit family. In terms of assembly, NDH-1 is composed of 13 different subunits. Subunits NuoB, CD, E, F, and G constitute the peripheral sector of the complex.

The protein resides in the cell inner membrane. The catalysed reaction is a quinone + NADH + 5 H(+)(in) = a quinol + NAD(+) + 4 H(+)(out). Functionally, NDH-1 shuttles electrons from NADH, via FMN and iron-sulfur (Fe-S) centers, to quinones in the respiratory chain. The immediate electron acceptor for the enzyme in this species is believed to be ubiquinone. Couples the redox reaction to proton translocation (for every two electrons transferred, four hydrogen ions are translocated across the cytoplasmic membrane), and thus conserves the redox energy in a proton gradient. This Buchnera aphidicola subsp. Schizaphis graminum (strain Sg) protein is NADH-quinone oxidoreductase subunit C/D.